The primary structure comprises 125 residues: Large ribosomal subunit protein eL31 (125 aa).

The protein belongs to the eukaryotic ribosomal protein eL31 family. In terms of assembly, component of the large ribosomal subunit.

It localises to the cytoplasm. Functionally, component of the large ribosomal subunit. The ribosome is a large ribonucleoprotein complex responsible for the synthesis of proteins in the cell. This Xenopus laevis (African clawed frog) protein is Large ribosomal subunit protein eL31 (rpl31).